The sequence spans 175 residues: Ribosome maturation factor RimM (175 aa).

The region spanning 99–172 (ADEYHVSDLI…RLEVDAPPGL (74 aa)) is the PRC barrel domain.

It belongs to the RimM family. In terms of assembly, binds ribosomal protein uS19.

The protein localises to the cytoplasm. In terms of biological role, an accessory protein needed during the final step in the assembly of 30S ribosomal subunit, possibly for assembly of the head region. Essential for efficient processing of 16S rRNA. May be needed both before and after RbfA during the maturation of 16S rRNA. It has affinity for free ribosomal 30S subunits but not for 70S ribosomes. This chain is Ribosome maturation factor RimM, found in Picosynechococcus sp. (strain ATCC 27264 / PCC 7002 / PR-6) (Agmenellum quadruplicatum).